A 1158-amino-acid polypeptide reads, in one-letter code: Phospholipid-transporting ATPase 1 (1158 aa).

Basic and acidic residues predominate over residues 1 to 15 (MDPRKSIDKPPHHDP). The tract at residues 1-30 (MDPRKSIDKPPHHDPILGVSSRWSVSSKDN) is disordered. Topologically, residues 1–100 (MDPRKSIDKP…TAKYSVFTFL (100 aa)) are cytoplasmic. The helical transmembrane segment at 101–122 (PRNLFEQFHRVAYIYFLVIAVL) threads the bilayer. Residues 123-127 (NQLPQ) lie on the Extracellular side of the membrane. The helical transmembrane segment at 128 to 150 (LAVFGRGASIMPLAFVLLVSAIK) threads the bilayer. Over 151 to 329 (DAYEDFRRHR…SRLETRMNLE (179 aa)) the chain is Cytoplasmic. Residues 330–351 (IILLSLFLIVLCTIAAATAAVW) traverse the membrane as a helical segment. Residues 352-391 (LRTHRDDLDTILFYRRKDYSERPGGKNYKYYGWGWEIFFT) are Extracellular-facing. A helical transmembrane segment spans residues 392 to 409 (FFMAVIVYQIMIPISLYI). The Cytoplasmic segment spans residues 410–914 (SMELVRIGQA…HGHWNYQRMG (505 aa)). Aspartate 457 serves as the catalytic 4-aspartylphosphate intermediate. Mg(2+) is bound by residues aspartate 859 and aspartate 863. A helical transmembrane segment spans residues 915-934 (YMILYNFYRNAVFVLILFWY). Topologically, residues 935–948 (VLFTCYTLTTAITE) are extracellular. A helical transmembrane segment spans residues 949 to 968 (WSSVLYSVIYTAIPTIIIGI). The Cytoplasmic segment spans residues 969 to 998 (LDKDLGRQTLLDHPQLYGVGQRAEGYSTTL). A helical transmembrane segment spans residues 999–1020 (FWYTMIDTIWQSAAIFFIPMFA). The Extracellular segment spans residues 1021-1027 (YWGSTID). A helical transmembrane segment spans residues 1028–1050 (TSSLGDLWTIAAVVVVNLHLAMD). At 1051-1056 (VIRWNW) the chain is on the cytoplasmic side. A helical membrane pass occupies residues 1057 to 1077 (ITHAAIWGSIVAACICVIVID). Residues 1078–1090 (VIPTLPGYWAIFQ) are Extracellular-facing. The helical transmembrane segment at 1091 to 1115 (VGKTWMFWFCLLAIVVTSLLPRFAI) threads the bilayer. The Cytoplasmic segment spans residues 1116–1158 (KFLVEYYRPSDVRIAREAEKLGTFRESQPVGVEMNLIQDPPRR).

The protein belongs to the cation transport ATPase (P-type) (TC 3.A.3) family. Type IV subfamily. In terms of tissue distribution, expressed in roots, flowers, anthers, leaves, vascular tissues and stems.

The protein resides in the endoplasmic reticulum membrane. It localises to the cell membrane. It carries out the reaction ATP + H2O + phospholipidSide 1 = ADP + phosphate + phospholipidSide 2.. Functionally, involved in transport of phospholipids. Contributes to transmembrane flipping of lipids. Has activity with phosphatidylserine and with a much lower efficiency with phosphatidylethanolamine, but not with phosphatidylcholine. The polypeptide is Phospholipid-transporting ATPase 1 (Arabidopsis thaliana (Mouse-ear cress)).